Consider the following 1119-residue polypeptide: GATOR2 complex protein MIOS (1119 aa).

A WD 1 repeat occupies Gln3–Asn43. The segment at Lys41 to Gln60 is disordered. Low complexity predominate over residues Asn45–Gln60. 5 WD repeats span residues Lys127 to Ser169, Lys183 to Leu227, Thr281 to Ser321, Ala324 to Ile364, and Ser368 to Lys409. The disordered stretch occupies residues Leu413 to Thr455. The span at Ser427–Ser444 shows a compositional bias: low complexity. A WD 7 repeat occupies His459–Trp499. Residues Pro601–Asn669 are disordered. Residues Ala973–Ser1016 form a C4-type zinc finger. Residues Cys975, Cys978, Cys1010, Cys1013, Cys1023, Cys1085, Cys1088, His1090, His1093, His1096, Cys1107, Cys1112, and Cys1116 each contribute to the Zn(2+) site.

This sequence belongs to the WD repeat mio family. In terms of assembly, probably part of the GATOR complex.

It is found in the lysosome membrane. In terms of biological role, as a component of the GATOR complex may function in the amino acid-sensing branch of the TORC1 signaling pathway. This chain is GATOR2 complex protein MIOS, found in Dictyostelium discoideum (Social amoeba).